The chain runs to 866 residues: N-alpha-acetyltransferase 15, NatA auxiliary subunit (866 aa).

TPR repeat units lie at residues 46–79 (GETL…DLKS), 80–113 (HVCW…DKDN), 148–184 (RASW…SPDK), and 224–257 (LAVE…NPEN). Position 262 is an N6-acetyllysine (lysine 262). The residue at position 302 (serine 302) is a Phosphoserine. 3 TPR repeats span residues 374–407 (LWVQ…TPTL), 409–441 (ELFL…DTAD), and 485–522 (MWFQ…TDDQ). Residues 500–866 (KFGEALKKCY…AEAEELANEI (367 aa)) are interaction with HYPK. Phosphoserine occurs at positions 537 and 588. Basic and acidic residues predominate over residues 579–594 (EHEADTANMSDKELKK). The interval 579-642 (EHEADTANMS…EEIGGPKEEL (64 aa)) is disordered. Residues 595-604 (LRNKQRRAQK) are compositionally biased toward basic residues. Residues 606-621 (AQIEEEKKNAEKEKQQ) are compositionally biased toward basic and acidic residues. One copy of the TPR 8 repeat lies at 672-705 (IETHLFAFEIYFRKEKFLLMLQSVKRAFAIDSSH). Lysine 735 and lysine 756 each carry N6-acetyllysine. Phosphoserine occurs at positions 855 and 856.

Component of the N-terminal acetyltransferase A (NatA) complex composed of NAA10 or probably NAA11 and NAA15. Interacts with XRCC6, NAA50 and XRCC5. Associates with HYPK when in a complex with NAA10. Interaction with HYPK reduces the capacity to interact with NAA50. Post-translationally, cleaved by caspases during apoptosis.

The protein localises to the cytoplasm. The protein resides in the nucleus. Auxillary subunit of the N-terminal acetyltransferase A (NatA) complex which displays alpha (N-terminal) acetyltransferase activity. The NAT activity may be important for vascular, hematopoietic and neuronal growth and development. Required to control retinal neovascularization in adult ocular endothelial cells. In complex with XRCC6 and XRCC5 (Ku80), up-regulates transcription from the osteocalcin promoter. This Pongo abelii (Sumatran orangutan) protein is N-alpha-acetyltransferase 15, NatA auxiliary subunit (NAA15).